A 142-amino-acid polypeptide reads, in one-letter code: Hemoglobin subunit alpha-1/2 (142 aa).

A Globin domain is found at 2 to 142 (VLSADDKTNI…VSTVLTSKYR (141 aa)). Serine 4 is subject to Phosphoserine. Lysine 8 bears the N6-succinyllysine mark. Threonine 9 carries the phosphothreonine modification. An N6-succinyllysine modification is found at lysine 12. At lysine 17 the chain carries N6-acetyllysine; alternate. Position 17 is an N6-succinyllysine; alternate (lysine 17). Tyrosine 25 is modified (phosphotyrosine). Lysine 41 is subject to N6-succinyllysine. Serine 50 is subject to Phosphoserine. Position 59 (histidine 59) interacts with O2. Histidine 88 lines the heme b pocket. The residue at position 103 (serine 103) is a Phosphoserine. Position 109 is a phosphothreonine (threonine 109). Phosphoserine is present on residues serine 125 and serine 132. Residues threonine 135 and threonine 138 each carry the phosphothreonine modification. Position 139 is a phosphoserine (serine 139).

This sequence belongs to the globin family. As to quaternary structure, heterotetramer of two alpha chains and two beta chains. As to expression, red blood cells.

Its function is as follows. Involved in oxygen transport from the lung to the various peripheral tissues. Hemopressin acts as an antagonist peptide of the cannabinoid receptor CNR1. Hemopressin-binding efficiently blocks cannabinoid receptor CNR1 and subsequent signaling. The polypeptide is Hemoglobin subunit alpha-1/2 (Hba1) (Rattus norvegicus (Rat)).